The primary structure comprises 265 residues: Aquaporin-5 (265 aa).

Topologically, residues 1-12 (MKKEVCSVAFFK) are cytoplasmic. Residues 13-33 (AVFAEFLATLIFVFFGLGSAL) traverse the membrane as a helical segment. The Extracellular segment spans residues 34–39 (KWPSAL). A helical membrane pass occupies residues 40-60 (PTILQISIAFGLAIGTLAQAL). The Cytoplasmic portion of the chain corresponds to 61-65 (GPVSG). The discontinuously helical intramembrane region spans 66 to 74 (GHINPAITL). The NPA 1 motif lies at 69 to 71 (NPA). Over 75–87 (ALLIGNQISLLRA) the chain is Cytoplasmic. The helical transmembrane segment at 88 to 108 (IFYVAAQLVGAIAGAGILYWL) threads the bilayer. Residues 109–126 (APGNARGNLAVNALSNNT) lie on the Extracellular side of the membrane. N-linked (GlcNAc...) asparagine glycosylation is present at Asn-124. A helical transmembrane segment spans residues 127–147 (TPGKAVVVELILTFQLALCIF). The Cytoplasmic segment spans residues 148-158 (SSTDSRRTSPV). The helical transmembrane segment at 159–179 (GSPALSIGLSVTLGHLVGIYF) threads the bilayer. Thr-180 is a topological domain (extracellular). The segment at residues 181–191 (GCSMNPARSFG) is an intramembrane region (discontinuously helical). The NPA 2 motif lies at 185–187 (NPA). Over 192 to 203 (PAVVMNRFSPSH) the chain is Extracellular. A helical membrane pass occupies residues 204–224 (WVFWVGPIVGAVLAAILYFYL). At 225–265 (LFPSSLSLHDRVAVVKGTYEPEEDWEDHREERKKTIELTAH) the chain is on the cytoplasmic side.

This sequence belongs to the MIP/aquaporin (TC 1.A.8) family. In terms of assembly, homotetramer; each monomer provides an independent water pore. Interacts with TRPV4; the interaction is probably indirect and regulates TRPV4 activation by hypotonicity. In terms of tissue distribution, detected at the luminal membrane of secretory epithelial cells in hindpaw sweat glands. Detected in acinar cells in salivary glands, in duct cells in lacrimal glands and in lung (at protein level). Detected in lung, parotid, submandibular, sublingual, and lacrimal gland tissues.

The protein resides in the apical cell membrane. It localises to the cell membrane. Its subcellular location is the cytoplasmic vesicle membrane. It catalyses the reaction H2O(in) = H2O(out). In terms of biological role, aquaporins form homotetrameric transmembrane channels, with each monomer independently mediating water transport across the plasma membrane along its osmotic gradient. Plays an important role in fluid secretion in salivary glands. Required for TRPV4 activation by hypotonicity. Together with TRPV4, controls regulatory volume decrease in salivary epithelial cells. Seems to play a redundant role in water transport in the eye, lung and in sweat glands. This Mus musculus (Mouse) protein is Aquaporin-5.